A 421-amino-acid chain; its full sequence is Indole-3-pyruvate monooxygenase YUCCA8 (421 aa).

30–35 (GAGPSG) contacts FAD. 201–206 (GCGNSG) is an NADP(+) binding site.

This sequence belongs to the FMO family. It depends on FAD as a cofactor. As to expression, expressed in organs undergoing active growth and cell division.

The protein resides in the endoplasmic reticulum. It catalyses the reaction indole-3-pyruvate + NADPH + O2 + H(+) = (indol-3-yl)acetate + CO2 + NADP(+) + H2O. In terms of biological role, involved in auxin biosynthesis. Converts the indole-3-pyruvic acid (IPA) produced by the TAA family to indole-3-acetic acid (IAA). Seems not able to use tryptamine (TAM) as substrate. Probably responsible for auxin biosynthesis in leaves and involved in the regulation of lateral leaf growth. Required for maintaining water homeostasis and an appropriate root to shoot ratio. Required for the inhibition of root growth by ethylene in etiolated seedlings. Functions downstream of the ethylene-response transcription factor EIL1. In Oryza sativa subsp. indica (Rice), this protein is Indole-3-pyruvate monooxygenase YUCCA8.